A 360-amino-acid polypeptide reads, in one-letter code: Photosystem II protein D1 (360 aa).

The next 3 membrane-spanning stretches (helical) occupy residues 30–47 (YVGW…AAAI), 119–134 (HFLI…QWEL), and 143–157 (WICV…AAFA). A chlorophyll a-binding site is contributed by His119. Residue Trp127 coordinates pheophytin a. Residues Asp171 and Glu190 each coordinate [CaMn4O5] cluster. Residues 198–219 (FHMAGVAGMFGGSLFSAMHGSL) traverse the membrane as a helical segment. Residue His199 participates in chlorophyll a binding. Residues His216 and 265–266 (SF) contribute to the a quinone site. His216 contributes to the Fe cation binding site. His273 contacts Fe cation. Residues 275–289 (FLAIFPVVCVWLTSM) form a helical membrane-spanning segment. His333, Glu334, Asp343, and Ala345 together coordinate [CaMn4O5] cluster. The propeptide occupies 346 to 360 (AAESTSVALVAPSIG).

This sequence belongs to the reaction center PufL/M/PsbA/D family. In terms of assembly, PSII is composed of 1 copy each of membrane proteins PsbA, PsbB, PsbC, PsbD, PsbE, PsbF, PsbH, PsbI, PsbJ, PsbK, PsbL, PsbM, PsbT, PsbX, PsbY, Psb30/Ycf12, peripheral proteins PsbO, CyanoQ (PsbQ), PsbU, PsbV and a large number of cofactors. It forms dimeric complexes. Requires The D1/D2 heterodimer binds P680, chlorophylls that are the primary electron donor of PSII, and subsequent electron acceptors. It shares a non-heme iron and each subunit binds pheophytin, quinone, additional chlorophylls, carotenoids and lipids. D1 provides most of the ligands for the Mn4-Ca-O5 cluster of the oxygen-evolving complex (OEC). There is also a Cl(-1) ion associated with D1 and D2, which is required for oxygen evolution. The PSII complex binds additional chlorophylls, carotenoids and specific lipids. as cofactor. Tyr-162 forms a radical intermediate that is referred to as redox-active TyrZ, YZ or Y-Z. In terms of processing, C-terminally processed by CtpA; processing is essential to allow assembly of the oxygen-evolving complex and thus photosynthetic growth.

Its subcellular location is the cellular thylakoid membrane. The catalysed reaction is 2 a plastoquinone + 4 hnu + 2 H2O = 2 a plastoquinol + O2. Functionally, photosystem II (PSII) is a light-driven water:plastoquinone oxidoreductase that uses light energy to abstract electrons from H(2)O, generating O(2) and a proton gradient subsequently used for ATP formation. It consists of a core antenna complex that captures photons, and an electron transfer chain that converts photonic excitation into a charge separation. The D1/D2 (PsbA/PsbD) reaction center heterodimer binds P680, the primary electron donor of PSII as well as several subsequent electron acceptors. The polypeptide is Photosystem II protein D1 (Prochlorococcus marinus (strain SARG / CCMP1375 / SS120)).